A 92-amino-acid chain; its full sequence is Small nuclear ribonucleoprotein E (92 aa).

The Sm domain maps to 18–92 (INLIFRYLQN…NITLLQSVSN (75 aa)).

The protein belongs to the snRNP Sm proteins family. As to quaternary structure, core component of the spliceosomal U1, U2, U4 and U5 small nuclear ribonucleoproteins (snRNPs), the building blocks of the spliceosome. Most spliceosomal snRNPs contain a common set of Sm proteins, snrpb, snrpd1, snrpd2, snrpd3, snrpe, snrpf and snrpg that assemble in a heptameric protein ring on the Sm site of the small nuclear RNA to form the core snRNP. Component of the U1 snRNP. The U1 snRNP is composed of the U1 snRNA and the 7 core Sm proteins snrpb, snrpd1, snrpd2, snrpd3, snrpe, snrpf and snrpg, and at least three U1 snRNP-specific proteins snrnp70/u1-70k, snrpa/u1-a and snrpc/u1-c. Component of the U4/U6-U5 tri-snRNP complex composed of the U4, U6 and U5 snRNAs and at least prpf3, prpf4, prpf6, prpf8, prpf31, snrnp200, txnl4a, snrnp40, snrpb, snrpd1, snrpd2, snrpd3, snrpe, snrpf, snrpg, ddx23, cd2bp2, ppih, snu13, eftud2, sart1 and usp39, plus lsm2, lsm3, lsm4, lsm5, lsm6, lsm7 and lsm8. Component of the U7 snRNP complex, or U7 Sm protein core complex, that is composed of the U7 snRNA and at least lsm10, lsm11, snrpb, snrpd3, snrpe, snrpf and snrpg; the complex does not contain snrpd1 and snrpd2. Component of the minor spliceosome, which splices U12-type introns. Part of the SMN-Sm complex that contains smn1, gemin2/sip1, ddx20/gemin3, gemin4, gemin5, gemin6, gemin7, gemin8, strap/unrip and the Sm proteins snrpb, snrpd1, snrpd2, snrpd3, snrpe, snrpf and snrpg; catalyzes core snRNPs assembly. Forms a 6S pICln-Sm complex composed of clns1a/pICln, snrpd1, snrpd2, snrpe, snrpf and snrpg; ring-like structure where clns1a/pICln mimics additional Sm proteins and which is unable to assemble into the core snRNP.

It is found in the cytoplasm. It localises to the cytosol. Its subcellular location is the nucleus. Plays a role in pre-mRNA splicing as a core component of the spliceosomal U1, U2, U4 and U5 small nuclear ribonucleoproteins (snRNPs), the building blocks of the spliceosome. Component of both the pre-catalytic spliceosome B complex and activated spliceosome C complexes. As a component of the minor spliceosome, involved in the splicing of U12-type introns in pre-mRNAs. As part of the U7 snRNP it is involved in histone 3'-end processing. The polypeptide is Small nuclear ribonucleoprotein E (snrpe) (Danio rerio (Zebrafish)).